Consider the following 514-residue polypeptide: Alanine--glyoxylate aminotransferase 2, mitochondrial (514 aa).

The N-terminal 41 residues, 1–41, are a transit peptide targeting the mitochondrion; that stretch reads MTLIWRHLLRPLCLVTPAPRILEMRPFLNLGASWTSVTKLS. N6-acetyllysine; alternate is present on K71. N6-succinyllysine; alternate is present on K71. N6-acetyllysine is present on K84. Position 262 is an N6-acetyllysine; alternate (K262). K262 bears the N6-succinyllysine; alternate mark. K304 is modified (N6-succinyllysine). Residue K350 is modified to N6-(pyridoxal phosphate)lysine. N6-acetyllysine; alternate is present on K420. Residue K420 is modified to N6-succinyllysine; alternate.

Belongs to the class-III pyridoxal-phosphate-dependent aminotransferase family. Homotetramer. Requires pyridoxal 5'-phosphate as cofactor.

Its subcellular location is the mitochondrion. The enzyme catalyses glyoxylate + L-alanine = glycine + pyruvate. It catalyses the reaction (R)-3-amino-2-methylpropanoate + pyruvate = 2-methyl-3-oxopropanoate + L-alanine. The catalysed reaction is 3-oxopropanoate + L-alanine = beta-alanine + pyruvate. It carries out the reaction 2-oxobutanoate + L-alanine = (2S)-2-aminobutanoate + pyruvate. The enzyme catalyses N(omega),N(omega)-dimethyl-L-arginine + pyruvate = 5-(3,3-dimethylguanidino)-2-oxopentanoate + L-alanine. It catalyses the reaction N(omega),N('omega)-dimethyl-L-arginine + pyruvate = 5-(3,3'-dimethylguanidino)-2-oxopentanoate + L-alanine. The catalysed reaction is N(omega),N(omega)-dimethyl-L-arginine + glyoxylate = 5-(3,3-dimethylguanidino)-2-oxopentanoate + glycine. It carries out the reaction N(omega),N('omega)-dimethyl-L-arginine + glyoxylate = 5-(3,3'-dimethylguanidino)-2-oxopentanoate + glycine. The enzyme catalyses N(omega)-methyl-L-arginine + pyruvate = 5-(3-methylguanidino)-2-oxopentanoate + L-alanine. It catalyses the reaction N(omega)-methyl-L-arginine + glyoxylate = 5-(3-methylguanidino)-2-oxopentanoate + glycine. The catalysed reaction is L-ornithine + pyruvate = 5-amino-2-oxopentanoate + L-alanine. It carries out the reaction L-ornithine + glyoxylate = 5-amino-2-oxopentanoate + glycine. The enzyme catalyses (2S)-2-aminobutanoate + glyoxylate = 2-oxobutanoate + glycine. It catalyses the reaction N(omega),N(omega)-dimethyl-L-arginine + oxaloacetate = 5-(3,3-dimethylguanidino)-2-oxopentanoate + L-aspartate. The catalysed reaction is oxaloacetate + L-alanine = L-aspartate + pyruvate. It carries out the reaction N(omega),N(omega)-dimethyl-L-arginine + 2-oxobutanoate = 5-(3,3-dimethylguanidino)-2-oxopentanoate + (2S)-2-aminobutanoate. The enzyme catalyses 2-oxopentanoate + N(omega),N(omega)-dimethyl-L-arginine = 5-(3,3-dimethylguanidino)-2-oxopentanoate + L-2-aminopentanoate. It catalyses the reaction 2-oxohexanoate + N(omega),N(omega)-dimethyl-L-arginine = L-2-aminohexanoate + 5-(3,3-dimethylguanidino)-2-oxopentanoate. Its function is as follows. Multifunctional aminotransferase with a broad substrate specificity. Catalyzes the conversion of glyoxylate to glycine using alanine as the amino donor. Catalyzes metabolism of not L- but the D-isomer of D-beta-aminoisobutyric acid to generate 2-methyl-3-oxopropanoate and alanine. Catalyzes the transfer of the amino group from beta-alanine to pyruvate to yield L-alanine and 3-oxopropanoate. Can metabolize NG-monomethyl-L-arginine (NMMA), asymmetric NG,NG-dimethyl-L-arginine (ADMA) and symmetric NG,N'G-dimethyl-L-arginine (SDMA). ADMA is a potent inhibitor of nitric-oxide (NO) synthase, and this activity provides mechanism through which the kidney regulates blood pressure. The polypeptide is Alanine--glyoxylate aminotransferase 2, mitochondrial (AGXT2) (Pongo abelii (Sumatran orangutan)).